The following is a 335-amino-acid chain: Endo-beta-N-acetylglucosaminidase F2 (335 aa).

A signal peptide spans 1–45 (MKTANFSFALCLSVVIMLFIKCTRSEQDLSVTKDAIAQKSGVTVS). Residues 61–321 (QISAGYYRTW…SSNDNTLRAP (261 aa)) enclose the GH18 domain. Residues Ser-73, Ser-89, and Ser-143 are each glycosylated (O-linked (Man...) serine). The Proton donor role is filled by Glu-171.

It belongs to the glycosyl hydrolase 18 family. Monomer. Carbohydrates at Ser-73, Ser-89 and Ser-143 consist of (2-OMe)Man1-4GlcNAcU1-4GlcU1-4Glc1-4(2-OMe)GlcU1-4[(2-OMe)Rham1-2]Man.

It is found in the secreted. It carries out the reaction an N(4)-(oligosaccharide-(1-&gt;3)-[oligosaccharide-(1-&gt;6)]-beta-D-Man-(1-&gt;4)-beta-D-GlcNAc-(1-&gt;4)-alpha-D-GlcNAc)-L-asparaginyl-[protein] + H2O = an oligosaccharide-(1-&gt;3)-[oligosaccharide-(1-&gt;6)]-beta-D-Man-(1-&gt;4)-D-GlcNAc + N(4)-(N-acetyl-beta-D-glucosaminyl)-L-asparaginyl-[protein]. Functionally, endohydrolysis of the di-N-acetylchitobiosyl unit in high-mannose glycopeptides and glycoproteins. Complex biantennary glycans are the preferred substrates. Tri- and tetraantennary glycans are not hydrolyzed, and high mannose glycans are very poor substrates. In Elizabethkingia meningoseptica (Chryseobacterium meningosepticum), this protein is Endo-beta-N-acetylglucosaminidase F2 (endOF2).